The following is a 141-amino-acid chain: Hemoglobin subunit alpha (141 aa).

The Globin domain occupies 1–141; that stretch reads VLSSKDKANV…VSTVLTSKYR (141 aa). S3 is subject to Phosphoserine. Residues K7 and K11 each carry the N6-succinyllysine modification. K16 carries the N6-acetyllysine; alternate modification. K16 is modified (N6-succinyllysine; alternate). A Phosphotyrosine modification is found at Y24. N6-succinyllysine is present on K40. S49 carries the phosphoserine modification. H58 is an O2 binding site. Residue H87 coordinates heme b. Residue S102 is modified to Phosphoserine. Position 108 is a phosphothreonine (T108). Residue S124 is modified to Phosphoserine. T134 and T137 each carry phosphothreonine. Position 138 is a phosphoserine (S138).

This sequence belongs to the globin family. In terms of assembly, heterotetramer of two alpha chains and two beta chains. In terms of tissue distribution, red blood cells.

In terms of biological role, involved in oxygen transport from the lung to the various peripheral tissues. Hemopressin acts as an antagonist peptide of the cannabinoid receptor CNR1. Hemopressin-binding efficiently blocks cannabinoid receptor CNR1 and subsequent signaling. The protein is Hemoglobin subunit alpha (HBA) of Lama vicugna (Vicugna).